A 354-amino-acid polypeptide reads, in one-letter code: MLSNLRILLNKAALRKAHTSMVRNFRYGKPVQSQVQLKGRDLLTLKNFTGEEIQYMLWLSADLKFRIKQKGEYLPLLQGKSLGMIFEKRSTRTRLSTETGFALLGGHPSFLTTQDIHLGVNESLTDTARVLSSMTDAVLARVYKQSDLDILAKEATIPIVNGLSDLYHPIQILADYLTLQEHYGSLKGLTLSWIGDGNNILHSIMMSAAKFGMHLQAATPKGYEPDPNIVKLAEQYAKENGTRLSMTNDPLEAARGGNVLITDTWISMGQEDEKKKRLQAFQGYQVTMKTAKVAASDWTFLHCLPRKPEEVDDEVFYSPRSLVFPEAENRKWTIMAVMVSLLTDYSPVLQKPKF.

The N-terminal 32 residues, 1 to 32, are a transit peptide targeting the mitochondrion; it reads MLSNLRILLNKAALRKAHTSMVRNFRYGKPVQ. Lys70 is modified (N6-acetyllysine; alternate). Lys70 carries the N6-succinyllysine; alternate modification. Position 80 is an N6-succinyllysine (Lys80). Lys88 carries the N6-acetyllysine; alternate modification. N6-succinyllysine; alternate is present on Lys88. Position 90–93 (90–93) interacts with carbamoyl phosphate; sequence STRT. Phosphoserine is present on Ser133. Arg141 contacts carbamoyl phosphate. Residue Lys144 is modified to N6-acetyllysine; alternate. Lys144 carries the post-translational modification N6-succinyllysine; alternate. 2 residues coordinate carbamoyl phosphate: His168 and Gln171. Asn199 is an L-ornithine binding site. Residues Lys221, Lys231, and Lys238 each carry the N6-acetyllysine; alternate modification. Lys221, Lys231, and Lys238 each carry N6-succinyllysine; alternate. L-ornithine-binding residues include Asp263, Ser267, and Met268. Residues Lys274 and Lys289 each carry the N6-succinyllysine modification. An N6-acetyllysine; alternate modification is found at Lys292. Lys292 carries the post-translational modification N6-succinyllysine; alternate. Cys303 acts as the Proton acceptor in catalysis. 303 to 304 serves as a coordination point for carbamoyl phosphate; sequence CL. At Lys307 the chain carries N6-acetyllysine; alternate. Lys307 carries the N6-succinyllysine; alternate modification. Arg330 is a carbamoyl phosphate binding site.

This sequence belongs to the aspartate/ornithine carbamoyltransferase superfamily. OTCase family. As to quaternary structure, homotrimer. Acetylation at Lys-88 negatively regulates ornithine carbamoyltransferase activity in response to nutrient signals.

The protein resides in the mitochondrion matrix. It carries out the reaction carbamoyl phosphate + L-ornithine = L-citrulline + phosphate + H(+). Its pathway is nitrogen metabolism; urea cycle; L-citrulline from L-ornithine and carbamoyl phosphate: step 1/1. Its activity is regulated as follows. Negatively regulated by lysine acetylation. Catalyzes the second step of the urea cycle, the condensation of carbamoyl phosphate with L-ornithine to form L-citrulline. The urea cycle ensures the detoxification of ammonia by converting it to urea for excretion. The sequence is that of Ornithine transcarbamylase, mitochondrial from Rattus norvegicus (Rat).